Here is a 142-residue protein sequence, read N- to C-terminus: Lysozyme X (142 aa).

The signal sequence occupies residues 1–19; it reads MRALLGICVLALVTPAVLG. In terms of domain architecture, C-type lysozyme spans 20 to 142; sequence RTMDRCSLAR…YLPPIDDCFV (123 aa). Intrachain disulfides connect Cys25/Cys140, Cys46/Cys130, Cys81/Cys97, and Cys93/Cys111. Active-site residues include Glu51 and Asp69.

It belongs to the glycosyl hydrolase 22 family. Found in the midgut.

It catalyses the reaction Hydrolysis of (1-&gt;4)-beta-linkages between N-acetylmuramic acid and N-acetyl-D-glucosamine residues in a peptidoglycan and between N-acetyl-D-glucosamine residues in chitodextrins.. Functionally, unlikely to play an active role in the humoral immune defense. May have a function in the digestion of bacteria in the food. May be involved in the clearance of bacteria from the larval gut before metamorphosis. The protein is Lysozyme X (LysX) of Drosophila melanogaster (Fruit fly).